Reading from the N-terminus, the 310-residue chain is Ribosomal RNA small subunit methyltransferase H (310 aa).

Residues 33–35 (AGH), D53, F79, D100, and Q107 contribute to the S-adenosyl-L-methionine site.

This sequence belongs to the methyltransferase superfamily. RsmH family.

The protein localises to the cytoplasm. It carries out the reaction cytidine(1402) in 16S rRNA + S-adenosyl-L-methionine = N(4)-methylcytidine(1402) in 16S rRNA + S-adenosyl-L-homocysteine + H(+). Functionally, specifically methylates the N4 position of cytidine in position 1402 (C1402) of 16S rRNA. The protein is Ribosomal RNA small subunit methyltransferase H of Clostridium botulinum (strain Alaska E43 / Type E3).